A 1311-amino-acid polypeptide reads, in one-letter code: Clustered mitochondria protein homolog (1311 aa).

A compositionally biased stretch (low complexity) spans 1-18 (MAEKTNGAAAPNGAADAP). The tract at residues 1-27 (MAEKTNGAAAPNGAADAPKSSPEQAQD) is disordered. The Clu domain maps to 324–568 (DITRTQESFL…RITPLDVSWQ (245 aa)). The stretch at 491–525 (IDYGAVDGKDLVATDERFVPQFQKLSKALKVKPHA) is one TPR 1 repeat. The segment covering 606 to 630 (SEVAKRGQAKKDQAAVEEKKEAKAE) has biased composition (basic and acidic residues). Disordered stretches follow at residues 606-694 (SEVA…SSDR) and 925-966 (PAPV…SSTI). Over residues 631 to 661 (SEEDSDSSSEEESSSDESDSEESSSDEDEEE) the composition is skewed to acidic residues. Residues 665–675 (PKKKSVPKKAA) are compositionally biased toward basic residues. Positions 676-694 (KKEEVKEEKKDEKEASSDR) are enriched in basic and acidic residues. TPR repeat units follow at residues 1034 to 1067 (ARVYHSLAMLYFQLEEKDAAVELARKAVIVAERT), 1076 to 1109 (LLDYLNLSLFLYQLGDSKQALEFTKHALNMWKII), and 1118 to 1151 (ITTINNAAVMLQQLKEYHESRRWFEEALRICEVV). Over residues 1276–1286 (LKFIEGTDKQK) the composition is skewed to basic and acidic residues. The interval 1276-1311 (LKFIEGTDKQKKPAAKKRTGRANPKRRGAEPVSTKA) is disordered. Over residues 1287–1301 (KPAAKKRTGRANPKR) the composition is skewed to basic residues.

This sequence belongs to the CLU family. In terms of assembly, may associate with the eukaryotic translation initiation factor 3 (eIF-3) complex.

The protein localises to the cytoplasm. Functionally, mRNA-binding protein involved in proper cytoplasmic distribution of mitochondria. This is Clustered mitochondria protein homolog from Pyricularia oryzae (strain 70-15 / ATCC MYA-4617 / FGSC 8958) (Rice blast fungus).